The following is a 404-amino-acid chain: S-adenosylmethionine synthase (404 aa).

An ATP-binding site is contributed by histidine 16. Aspartate 18 contributes to the Mg(2+) binding site. Residue glutamate 44 coordinates K(+). Residues glutamate 57 and glutamine 100 each contribute to the L-methionine site. The tract at residues 100-110 is flexible loop; it reads QSPEINQGVAR. ATP contacts are provided by residues 177–179, aspartate 257, 263–264, alanine 280, and lysine 284; these read DGK and RK. Residue aspartate 257 participates in L-methionine binding. Lysine 288 serves as a coordination point for L-methionine.

It belongs to the AdoMet synthase family. As to quaternary structure, homotetramer; dimer of dimers. Requires Mg(2+) as cofactor. K(+) serves as cofactor.

Its subcellular location is the cytoplasm. The enzyme catalyses L-methionine + ATP + H2O = S-adenosyl-L-methionine + phosphate + diphosphate. It participates in amino-acid biosynthesis; S-adenosyl-L-methionine biosynthesis; S-adenosyl-L-methionine from L-methionine: step 1/1. Functionally, catalyzes the formation of S-adenosylmethionine (AdoMet) from methionine and ATP. The overall synthetic reaction is composed of two sequential steps, AdoMet formation and the subsequent tripolyphosphate hydrolysis which occurs prior to release of AdoMet from the enzyme. This Bifidobacterium adolescentis (strain ATCC 15703 / DSM 20083 / NCTC 11814 / E194a) protein is S-adenosylmethionine synthase.